The chain runs to 371 residues: Maltose/maltodextrin import ATP-binding protein MalK (371 aa).

One can recognise an ABC transporter domain in the interval 4 to 234 (VQLQNVTKAW…PADRFVAGFI (231 aa)). 36 to 43 (GPSGCGKS) provides a ligand contact to ATP.

The protein belongs to the ABC transporter superfamily. Maltooligosaccharide importer (TC 3.A.1.1.1) family. The complex is composed of two ATP-binding proteins (MalK), two transmembrane proteins (MalG and MalK) and a solute-binding protein (MalE).

It is found in the cell inner membrane. The catalysed reaction is D-maltose(out) + ATP + H2O = D-maltose(in) + ADP + phosphate + H(+). Its function is as follows. Part of the ABC transporter complex MalEFGK involved in maltose/maltodextrin import. Responsible for energy coupling to the transport system. The chain is Maltose/maltodextrin import ATP-binding protein MalK from Escherichia coli O157:H7.